The chain runs to 284 residues: Tetraspanin-10 (284 aa).

Residues 1–11 (MGMGTSTFVIR) are Cytoplasmic-facing. The chain crosses the membrane as a helical span at residues 12–32 (WVNLLTMLLAVAVIIFGVWMS). At 33–43 (THNDGCRRSLT) the chain is on the extracellular side. The helical transmembrane segment at 44–64 (FPVIALGGFIFLISIIGFLGA) threads the bilayer. Topologically, residues 65–75 (CKRSVALLWIY) are cytoplasmic. A helical membrane pass occupies residues 76 to 96 (LAVLLIVLIAILVFTVLAFIV). At 97 to 228 (TNNGSGHTNP…AGVAQYMKTE (132 aa)) the chain is on the extracellular side. N-linked (GlcNAc...) asparagine glycans are attached at residues Asn99, Asn128, and Asn183. The chain crosses the membrane as a helical span at residues 229-249 (WRLVAIFNVVLFVVLISSLLS). Topologically, residues 250–284 (TRFDSEQSFGLLNGLVQISNITFKDCQTTTVPKQF) are cytoplasmic.

Belongs to the tetraspanin (TM4SF) family.

It localises to the membrane. Functionally, may be involved in the regulation of cell differentiation. This chain is Tetraspanin-10 (TET10), found in Arabidopsis thaliana (Mouse-ear cress).